Consider the following 544-residue polypeptide: CTP synthase (544 aa).

Residues 1-265 (MTKFIFVTGG…DNIITEQLQL (265 aa)) are amidoligase domain. Ser-13 contacts CTP. A UTP-binding site is contributed by Ser-13. ATP is bound by residues 14 to 19 (SLGKGI) and Asp-71. The Mg(2+) site is built by Asp-71 and Glu-139. CTP contacts are provided by residues 146-148 (DIE), 186-191 (KTKPTQ), and Lys-222. UTP contacts are provided by residues 186–191 (KTKPTQ) and Lys-222. The 255-residue stretch at 290-544 (KIAMVGKYVD…VKAALNNKKA (255 aa)) folds into the Glutamine amidotransferase type-1 domain. Position 353 (Gly-353) interacts with L-glutamine. The active-site Nucleophile; for glutamine hydrolysis is Cys-380. L-glutamine-binding positions include 381 to 384 (LGMQ), Glu-404, and Arg-471. Catalysis depends on residues His-517 and Glu-519.

It belongs to the CTP synthase family. In terms of assembly, homotetramer.

The enzyme catalyses UTP + L-glutamine + ATP + H2O = CTP + L-glutamate + ADP + phosphate + 2 H(+). It carries out the reaction L-glutamine + H2O = L-glutamate + NH4(+). The catalysed reaction is UTP + NH4(+) + ATP = CTP + ADP + phosphate + 2 H(+). Its pathway is pyrimidine metabolism; CTP biosynthesis via de novo pathway; CTP from UDP: step 2/2. Its activity is regulated as follows. Allosterically activated by GTP, when glutamine is the substrate; GTP has no effect on the reaction when ammonia is the substrate. The allosteric effector GTP functions by stabilizing the protein conformation that binds the tetrahedral intermediate(s) formed during glutamine hydrolysis. Inhibited by the product CTP, via allosteric rather than competitive inhibition. In terms of biological role, catalyzes the ATP-dependent amination of UTP to CTP with either L-glutamine or ammonia as the source of nitrogen. Regulates intracellular CTP levels through interactions with the four ribonucleotide triphosphates. In Neisseria meningitidis serogroup C (strain 053442), this protein is CTP synthase.